Reading from the N-terminus, the 198-residue chain is ATP-dependent Clp protease proteolytic subunit (198 aa).

The active-site Nucleophile is the S101. H126 is a catalytic residue.

It belongs to the peptidase S14 family. In terms of assembly, component of the chloroplastic Clp protease core complex.

It is found in the plastid. Its subcellular location is the chloroplast stroma. The enzyme catalyses Hydrolysis of proteins to small peptides in the presence of ATP and magnesium. alpha-casein is the usual test substrate. In the absence of ATP, only oligopeptides shorter than five residues are hydrolyzed (such as succinyl-Leu-Tyr-|-NHMec, and Leu-Tyr-Leu-|-Tyr-Trp, in which cleavage of the -Tyr-|-Leu- and -Tyr-|-Trp bonds also occurs).. Functionally, cleaves peptides in various proteins in a process that requires ATP hydrolysis. Has a chymotrypsin-like activity. Plays a major role in the degradation of misfolded proteins. In Psilotum nudum (Whisk fern), this protein is ATP-dependent Clp protease proteolytic subunit.